A 282-amino-acid chain; its full sequence is MGQKVNPHGFRLGITTNHVSHWFADSNKAGQRYKDFVREDIKIRQLMSTGMERAGIAKVEIERTRDRVRVDIHTARPGIVIGRRGAEADRIRGELEKLTGKQVQLNILEVKNPEMEAQLVAQGIAEQLSSRVAFRRAMKKAMQSAQRAGAKGIRVQCSGRLGGAEMSRSEFYREGRVPLHTLRAQIDYGFFEAKTTFGRIGVKVWIYKGDVTAKELAQQAASAPSRGRAPRRDGDDRGPRRENSGPRRDGGNLRSQRNDRNENAAVEAAPAAAAVATEGSDA.

One can recognise a KH type-2 domain in the interval 43 to 111 (IRQLMSTGME…QVQLNILEVK (69 aa)). The segment at 218 to 282 (QQAASAPSRG…AAVATEGSDA (65 aa)) is disordered. A compositionally biased stretch (basic and acidic residues) spans 230-262 (PRRDGDDRGPRRENSGPRRDGGNLRSQRNDRNE). Residues 263–276 (NAAVEAAPAAAAVA) show a composition bias toward low complexity.

Belongs to the universal ribosomal protein uS3 family. Part of the 30S ribosomal subunit. Forms a tight complex with proteins S10 and S14.

Binds the lower part of the 30S subunit head. Binds mRNA in the 70S ribosome, positioning it for translation. This Renibacterium salmoninarum (strain ATCC 33209 / DSM 20767 / JCM 11484 / NBRC 15589 / NCIMB 2235) protein is Small ribosomal subunit protein uS3.